The following is a 159-amino-acid chain: Large ribosomal subunit protein uL15 (159 aa).

Residues 1-18 (MKLNEIRDNEGSSKDRIR) are compositionally biased toward basic and acidic residues. The interval 1-37 (MKLNEIRDNEGSSKDRIRVGRGIGSGKGKTGGRGVKG) is disordered. Over residues 21-35 (RGIGSGKGKTGGRGV) the composition is skewed to gly residues.

The protein belongs to the universal ribosomal protein uL15 family. In terms of assembly, part of the 50S ribosomal subunit.

Binds to the 23S rRNA. This chain is Large ribosomal subunit protein uL15, found in Agrobacterium fabrum (strain C58 / ATCC 33970) (Agrobacterium tumefaciens (strain C58)).